A 98-amino-acid chain; its full sequence is Feather keratin 2 (98 aa).

Position 2 is an N-acetylserine (serine 2).

Belongs to the avian keratin family. As to quaternary structure, the avian keratins (F-ker, S-ker, C-ker and B-ker) are a complex mixture of very similar polypeptides.

This chain is Feather keratin 2, found in Gallus gallus (Chicken).